The sequence spans 245 residues: Protein virB1 (245 aa).

The first 28 residues, 1–28 (MLKATGPLSIILLASTCPSSGAAPLSFA), serve as a signal peptide directing secretion. The tract at residues 176–245 (LVPPLTARPK…LFDLNQGGPQ (70 aa)) is disordered. Basic and acidic residues predominate over residues 183 to 193 (RPKDDREKPGS).

The protein belongs to the virb1 family.

VirB proteins are suggested to act at the bacterial surface and there play an important role in directing T-DNA transfer to plant cells. In Agrobacterium fabrum (strain C58 / ATCC 33970) (Agrobacterium tumefaciens (strain C58)), this protein is Protein virB1 (virB1).